Here is a 107-residue protein sequence, read N- to C-terminus: MKTLLLTLVVVTIVCLDLGDSLRCYMGPKTPRTCPPGENLCFTKTWCDPRCSLLGKLVKLGCAATCPIPKSYEDVTCCSTDNCNRFPKWERSRPRPRGLLSSIMDHP.

The signal sequence occupies residues 1 to 21; sequence MKTLLLTLVVVTIVCLDLGDS. 5 disulfide bridges follow: cysteine 24–cysteine 41, cysteine 34–cysteine 62, cysteine 47–cysteine 51, cysteine 66–cysteine 77, and cysteine 78–cysteine 83.

This sequence belongs to the three-finger toxin family. Long-chain subfamily. Type II alpha-neurotoxin sub-subfamily. Expressed by the venom gland.

The protein resides in the secreted. Its function is as follows. Binds with high affinity to muscular (alpha-1/CHRNA1) and neuronal (alpha-7/CHRNA7) nicotinic acetylcholine receptor (nAChR) and inhibits acetylcholine from binding to the receptor, thereby impairing neuromuscular and neuronal transmission. The polypeptide is Alpha-elapitoxin-Al2a (Austrelaps labialis (Pygmy copperhead)).